A 434-amino-acid chain; its full sequence is Histidinol dehydrogenase (434 aa).

Y130, Q188, and N211 together coordinate NAD(+). The substrate site is built by S237, Q259, and H262. Zn(2+) contacts are provided by Q259 and H262. Active-site proton acceptor residues include E326 and H327. Residues H327, D360, E414, and H419 each contribute to the substrate site. A Zn(2+)-binding site is contributed by D360. H419 contributes to the Zn(2+) binding site.

It belongs to the histidinol dehydrogenase family. As to quaternary structure, homodimer. Zn(2+) is required as a cofactor.

It carries out the reaction L-histidinol + 2 NAD(+) + H2O = L-histidine + 2 NADH + 3 H(+). The protein operates within amino-acid biosynthesis; L-histidine biosynthesis; L-histidine from 5-phospho-alpha-D-ribose 1-diphosphate: step 9/9. Catalyzes the sequential NAD-dependent oxidations of L-histidinol to L-histidinaldehyde and then to L-histidine. This chain is Histidinol dehydrogenase, found in Escherichia coli (strain K12).